The following is a 249-amino-acid chain: RING finger protein 223 (249 aa).

The interval 1 to 44 is disordered; the sequence is MSSGQQVWHTAVPPPRRSSSIASMPRSPSSAGSPRSPGTPGSER. The segment covering 17–44 has biased composition (low complexity); sequence RSSSIASMPRSPSSAGSPRSPGTPGSER. An RING-type zinc finger spans residues 51-102; the sequence is CSICFSGYDNIFKTPKELSCTHVFCLECLARLAAAQPVGRPGGEAVPCPFCR. A helical transmembrane segment spans residues 199–219; sequence LVSALLLMLFCVALWPVQCAL. Residues 230–249 form a disordered region; sequence PPRPPATSTAASPLGPLTDN. Positions 235–249 are enriched in low complexity; that stretch reads ATSTAASPLGPLTDN.

The protein resides in the membrane. The sequence is that of RING finger protein 223 (RNF223) from Homo sapiens (Human).